A 303-amino-acid polypeptide reads, in one-letter code: Trans-aconitate 2-methyltransferase (303 aa).

The tract at residues 271 to 303 (EGSGGSGGSGGSAGSAGCAGSGGSVGPAGEAGR) is disordered. Over residues 272-303 (GSGGSGGSGGSAGSAGCAGSGGSVGPAGEAGR) the composition is skewed to gly residues.

Belongs to the methyltransferase superfamily. Tam family.

Its subcellular location is the cytoplasm. The enzyme catalyses trans-aconitate + S-adenosyl-L-methionine = (E)-3-(methoxycarbonyl)pent-2-enedioate + S-adenosyl-L-homocysteine. Its function is as follows. Catalyzes the S-adenosylmethionine monomethyl esterification of trans-aconitate. The chain is Trans-aconitate 2-methyltransferase from Streptomyces coelicolor (strain ATCC BAA-471 / A3(2) / M145).